We begin with the raw amino-acid sequence, 430 residues long: MATLILGSQWGDEGKGKLTDILCPKAQICARAAGGHNAGHSIVANGVEYDFHLLPSGLVNPNCMNLIGSSVVFHVPSFFSELSKLEEKGLTDVHNRILVSDRCHVNFDLHAAVDGLEEVELGDRKIGTTGRGIGPSYSTKMARSGVRIHEIFNEEIFERKLRQLAAGYKKRFGDLLKYDVEEEIARFKEYRVKLARYTVDAIQYMKEAQDRGYKILIEGANALMLDIDYGTYPYVTSSNTGLGGIITGLAINPTKIDNIIGVVKAYTTRVGGGPFKTEDLEEAGTKLQEIGREWGVSTGRKRRCGWLDLVVLKYSTAINNYTALNLTKLDILDTFETIKVAVAYKDPQTGEEVEYFPADLDILDSLEVVYKELPGWNKPITDCKTYYDLPKEARAYIEFIEEFVGVPICYIGTGPKREDMIVRKTSAIKE.

Residues 11–17 (GDEGKGK) and 39–41 (GHS) contribute to the GTP site. Residue Asp-12 is the Proton acceptor of the active site. Residues Asp-12 and Gly-39 each contribute to the Mg(2+) site. IMP is bound by residues 12-15 (DEGK), 37-40 (NAGH), Thr-129, Arg-143, Asn-221, Thr-236, and Arg-300. The Proton donor role is filled by His-40. 296–302 (VSTGRKR) is a substrate binding site. GTP-binding positions include Arg-302, 328-330 (KLD), and 412-414 (GTG).

Belongs to the adenylosuccinate synthetase family. As to quaternary structure, homodimer. Mg(2+) is required as a cofactor.

It is found in the cytoplasm. It carries out the reaction IMP + L-aspartate + GTP = N(6)-(1,2-dicarboxyethyl)-AMP + GDP + phosphate + 2 H(+). Its pathway is purine metabolism; AMP biosynthesis via de novo pathway; AMP from IMP: step 1/2. Plays an important role in the de novo pathway and in the salvage pathway of purine nucleotide biosynthesis. Catalyzes the first committed step in the biosynthesis of AMP from IMP. In Neurospora crassa (strain ATCC 24698 / 74-OR23-1A / CBS 708.71 / DSM 1257 / FGSC 987), this protein is Adenylosuccinate synthetase.